Reading from the N-terminus, the 317-residue chain is MSKTHQKVVLIGDGAVGSSYAFAMVQQGLAQEFAIIDLNKKRTEGDALDLEDATPFTAPKLVYGADYDTCKDADLVVITAGAPQKPGETRLDLVDKNLKIIKSVVEPVVKSGFQGIFLVAANPVDILTYAVQKFSGFPRNKVVGSGTSLDSARLRVGLSKLFNVSPVDVNANMMAEHGDTEFAAFSSATIGGLPLYDLAEAKGISKDDLYKLEDDVRNKAYAIINSKGATFYGVATALMRISRAILRDENAVLPVGAPMSGEYGLKDIYIGTPAVINANGIAEVLEVPLDEREAKAMADSAKTLEEIAKNGMAKIQG.

NAD(+) contacts are provided by residues Val16, Asp37, Arg42, Tyr67, and 81-82 (GA). Substrate-binding residues include Gln84 and Arg90. Residues Ser103, 120 to 122 (AAN), and Ser145 each bind NAD(+). Position 122-125 (122-125 (NPVD)) interacts with substrate. 150-153 (DSAR) contacts substrate. The active-site Proton acceptor is His177. Position 221 is a phosphotyrosine (Tyr221). A substrate-binding site is contributed by Thr230.

The protein belongs to the LDH/MDH superfamily. LDH family. Homotetramer.

The protein localises to the cytoplasm. It carries out the reaction (S)-lactate + NAD(+) = pyruvate + NADH + H(+). The protein operates within fermentation; pyruvate fermentation to lactate; (S)-lactate from pyruvate: step 1/1. Catalyzes the conversion of lactate to pyruvate. This Limosilactobacillus fermentum (strain NBRC 3956 / LMG 18251) (Lactobacillus fermentum) protein is L-lactate dehydrogenase.